Here is a 759-residue protein sequence, read N- to C-terminus: 1,4-alpha-glucan branching enzyme GlgB (759 aa).

The tract at residues 1 to 21 is disordered; sequence MAKTKGLPKDTAVTPSPHLRP. The active-site Nucleophile is Asp-422. The active-site Proton donor is the Glu-475.

This sequence belongs to the glycosyl hydrolase 13 family. GlgB subfamily. In terms of assembly, monomer.

It catalyses the reaction Transfers a segment of a (1-&gt;4)-alpha-D-glucan chain to a primary hydroxy group in a similar glucan chain.. The protein operates within glycan biosynthesis; glycogen biosynthesis. In terms of biological role, catalyzes the formation of the alpha-1,6-glucosidic linkages in glycogen by scission of a 1,4-alpha-linked oligosaccharide from growing alpha-1,4-glucan chains and the subsequent attachment of the oligosaccharide to the alpha-1,6 position. This Mycobacterium sp. (strain JLS) protein is 1,4-alpha-glucan branching enzyme GlgB.